Consider the following 351-residue polypeptide: Ferredoxin--NADP reductase (351 aa).

Residues D44, Q52, Y57, V97, F132, D296, and S337 each contribute to the FAD site.

The protein belongs to the ferredoxin--NADP reductase type 2 family. In terms of assembly, homodimer. Requires FAD as cofactor.

The catalysed reaction is 2 reduced [2Fe-2S]-[ferredoxin] + NADP(+) + H(+) = 2 oxidized [2Fe-2S]-[ferredoxin] + NADPH. The polypeptide is Ferredoxin--NADP reductase (Paraburkholderia phymatum (strain DSM 17167 / CIP 108236 / LMG 21445 / STM815) (Burkholderia phymatum)).